The following is an 89-amino-acid chain: Small ribosomal subunit protein uS15 (89 aa).

It belongs to the universal ribosomal protein uS15 family. As to quaternary structure, part of the 30S ribosomal subunit. Forms a bridge to the 50S subunit in the 70S ribosome, contacting the 23S rRNA.

In terms of biological role, one of the primary rRNA binding proteins, it binds directly to 16S rRNA where it helps nucleate assembly of the platform of the 30S subunit by binding and bridging several RNA helices of the 16S rRNA. Functionally, forms an intersubunit bridge (bridge B4) with the 23S rRNA of the 50S subunit in the ribosome. This Pseudarthrobacter chlorophenolicus (strain ATCC 700700 / DSM 12829 / CIP 107037 / JCM 12360 / KCTC 9906 / NCIMB 13794 / A6) (Arthrobacter chlorophenolicus) protein is Small ribosomal subunit protein uS15.